We begin with the raw amino-acid sequence, 233 residues long: Large ribosomal subunit protein uL22m (233 aa).

This sequence belongs to the universal ribosomal protein uL22 family. In terms of assembly, component of the mitochondrial ribosome large subunit (39S) which comprises a 16S rRNA and about 50 distinct proteins.

Its subcellular location is the mitochondrion. In Drosophila melanogaster (Fruit fly), this protein is Large ribosomal subunit protein uL22m (mRpL22).